The following is a 136-amino-acid chain: Ribosome-binding factor A (136 aa).

The segment at 1 to 22 (MNTAGPAGKLAGHAASGPTQRQ) is disordered.

It belongs to the RbfA family. As to quaternary structure, monomer. Binds 30S ribosomal subunits, but not 50S ribosomal subunits or 70S ribosomes.

The protein resides in the cytoplasm. In terms of biological role, one of several proteins that assist in the late maturation steps of the functional core of the 30S ribosomal subunit. Associates with free 30S ribosomal subunits (but not with 30S subunits that are part of 70S ribosomes or polysomes). Required for efficient processing of 16S rRNA. May interact with the 5'-terminal helix region of 16S rRNA. This chain is Ribosome-binding factor A, found in Gluconacetobacter diazotrophicus (strain ATCC 49037 / DSM 5601 / CCUG 37298 / CIP 103539 / LMG 7603 / PAl5).